Consider the following 342-residue polypeptide: Endo-1,4-beta-xylanase A (342 aa).

In terms of domain architecture, GH10 spans 11 to 342 (EMLNLSLAKT…KEALYRILRF (332 aa)). The active-site Proton donor is the Glu144. Residue Glu252 is the Nucleophile of the active site.

This sequence belongs to the glycosyl hydrolase 10 (cellulase F) family. Cytoplasmic xylanase subfamily.

Its subcellular location is the cytoplasm. It carries out the reaction Endohydrolysis of (1-&gt;4)-beta-D-xylosidic linkages in xylans.. The protein operates within glycan degradation; xylan degradation. This is Endo-1,4-beta-xylanase A (xynA) from Caldicellulosiruptor saccharolyticus (Caldocellum saccharolyticum).